The primary structure comprises 2126 residues: Serine/threonine-protein kinase WNK1 (2126 aa).

Disordered stretches follow at residues 1 to 80 (MSDG…FFRR) and 93 to 202 (LPGL…QQQD). The residue at position 17 (Ser17) is a Phosphoserine. Residues 48–64 (RTEEYRRRRHTMDKDSR) show a composition bias toward basic and acidic residues. Phosphothreonine is present on Thr58. Low complexity-rich tracts occupy residues 101–111 (PQPSVPAVVPQ) and 127–141 (VASQ…AASP). Phosphoserine occurs at positions 165 and 172. Residues 221–479 (LKFDIEIGRG…IKDLLNHAFF (259 aa)) form the Protein kinase domain. Ser231 lines the ATP pocket. 2 residues coordinate chloride: Phe283 and Leu299. Residues 301–304 (TELM) and Lys351 each bind ATP. Catalysis depends on Asp368, which acts as the Proton acceptor. The chloride site is built by Leu369 and Leu371. Ser378 and Ser382 each carry phosphoserine; by autocatalysis. The autoinhibitory domain stretch occupies residues 488-555 (ELAEEDDGEK…VCEGDHKTMA (68 aa)). Residues 573–588 (QLVREEQEKRKQEESS) are compositionally biased toward basic and acidic residues. Residues 573–865 (QLVREEQEKR…SRHEKTSRPK (293 aa)) are disordered. Residues 593–614 (NEQQASVSQAGIQPLSVASTGI) are compositionally biased toward polar residues. Positions 615–626 (PTAPTTSASVST) are enriched in low complexity. The interval 629–639 (EPEEPEADQHQ) is interaction with KLHL3. 3 stretches are compositionally biased toward polar residues: residues 638 to 682 (HQQL…GSQH), 695 to 705 (TVSSIQAQSQP), and 713 to 733 (SMAQ…VLSS). Residues 734-746 (QPVQHPQQQGIQP) are compositionally biased toward low complexity. Residues 750 to 789 (PQQAVQYSLPQAASSSEGTVQPVSQPQVSAGTQSSTQGVS) are compositionally biased toward polar residues. Positions 793–823 (PPEQTPITQSQPTQPVPLVSSVDSAHSDVAS) are enriched in low complexity. Over residues 826-836 (SDGNENAPSSS) the composition is skewed to polar residues. Positions 844-865 (TKRHYRKSVRSRSRHEKTSRPK) are enriched in basic residues. Positions 1003–1006 (RFIV) match the RFXV motif 1 motif. Position 1007 is a phosphoserine (Ser1007). Disordered regions lie at residues 1474-1507 (GQVS…LTKT) and 1557-1595 (IPVT…ASSS). Residues 1477–1496 (STPGTHASAPASTATGAKPG) show a composition bias toward low complexity. Positions 1567–1583 (STMSSTAVTEAGSQPQK) are enriched in polar residues. Residues 1604-1607 (RFQV) carry the RFXV motif 2 motif. The interval 1610-1695 (TMDDAQKERK…TKVGRFQVTT (86 aa)) is disordered. A compositionally biased stretch (basic and acidic residues) spans 1613–1629 (DAQKERKNRSEDTKSVH). The segment covering 1632–1650 (SSTSESSVLSSSSPESTLV) has biased composition (low complexity). 2 consecutive short sequence motifs (RFXV motif) follow at residues 1690 to 1693 (RFQV) and 1702 to 1705 (RFSV). Over residues 1709 to 1719 (EDKVTELKKEG) the composition is skewed to basic and acidic residues. Disordered stretches follow at residues 1709–1783 (EDKV…LCSK), 1856–1940 (VIIP…NLYS), and 1952–1990 (SLSA…KGTF). Phosphoserine is present on Ser1723. A compositionally biased stretch (basic and acidic residues) spans 1738–1747 (PKKEKPELAE). 6 positions are modified to phosphoserine: Ser1755, Ser1756, Ser1771, Ser1773, Ser1776, and Ser1865. Basic residues predominate over residues 1866 to 1878 (GRRRRPTKSKGSK). Residues 1879-1889 (SSRSSSLGNKS) show a composition bias toward low complexity. Polar residues predominate over residues 1890–1940 (PQLSGNLSGQSGTSVLNPQQTLHPPGNTPETGHNQLLQPLKPSPSSDNLYS). Positions 1957 to 1981 (GQGTSSTNTVGGTVSSQAAQAQPPA) are enriched in low complexity. The tract at residues 1985–2005 (SRKGTFTDDLHKLVDNWARDA) is amphipathic alpha-helix. A phosphoserine mark is found at Ser2014 and Ser2030. A disordered region spans residues 2076 to 2097 (PFGTQWSGTGGPAPQPLGQFQP). Residues Ser2114 and Ser2116 each carry the phosphoserine modification.

It belongs to the protein kinase superfamily. Ser/Thr protein kinase family. WNK subfamily. In terms of assembly, interacts with WNK3. Interacts with WNK4; inhibiting the activity of WNK4. Interacts with SGK1; promoting its activation. Associates with the mTORC2 complex. Interacts with UVRAG. Interacts (via amphipathic alpha-helix region) with EMC2; promoting the ER membrane protein complex assembly. As to quaternary structure, interacts with isoform 1; inhibiting isoform 1 activity. The cofactor is Mg(2+). In terms of processing, autophosphorylated at Ser-378 and Ser-382, promoting its activity. Autophosphorylation at Ser-382 is inhibited by intracellular calcium. Phosphorylation at Thr-58 increases ability to activate SGK1. Ubiquitinated by the BCR(KLHL3) complex, leading to its degradation. Also ubiquitinated by the BCR(KLHL2) complex. Post-translationally, may be O-glycosylated.

It is found in the cytoplasm. The protein localises to the nucleus. The protein resides in the cytoskeleton. It localises to the spindle. The catalysed reaction is L-seryl-[protein] + ATP = O-phospho-L-seryl-[protein] + ADP + H(+). It catalyses the reaction L-threonyl-[protein] + ATP = O-phospho-L-threonyl-[protein] + ADP + H(+). With respect to regulation, activated in response to hyperosmotic stress: cell shrinkage promotes formation of a membraneless compartment that concentrates WNK1 with its substrates, OXSR1/OSR1 and STK39/SPAK. Activation requires autophosphorylation of Ser-382 and, to a lower extent, Ser-378. Autophosphorylation and subsequent activation is inhibited by increases in intracellular ionic strength: Cl(-) potently inhibits WNK1 kinase activity via direct binding. Also inhibited by K(+) ions. Inhibited by Compound 12 ((5-Chloro-2-(2-((methyl-d3)amino)thiazol-4-yl)- pyridin-4-yl)(4-(4-chlorobenzyl)piperazin-1-yl)methanone). In terms of biological role, serine/threonine-protein kinase component of the WNK1-SPAK/OSR1 kinase cascade, which acts as a key regulator of blood pressure and regulatory volume increase by promoting ion influx. WNK1 mediates regulatory volume increase in response to hyperosmotic stress by acting as a molecular crowding sensor, which senses cell shrinkage and mediates formation of a membraneless compartment by undergoing liquid-liquid phase separation. The membraneless compartment concentrates WNK1 with its substrates, OXSR1/OSR1 and STK39/SPAK, promoting WNK1-dependent phosphorylation and activation of downstream kinases OXSR1/OSR1 and STK39/SPAK. Following activation, OXSR1/OSR1 and STK39/SPAK catalyze phosphorylation of ion cotransporters SLC12A1/NKCC2, SLC12A2/NKCC1, SLC12A5/KCC2 and SLC12A6/KCC3, regulating their activity. Phosphorylation of Na-K-Cl cotransporters SLC12A2/NKCC1 and SLC12A2/NKCC1 promote their activation and ion influx; simultaneously, phosphorylation of K-Cl cotransporters SLC12A5/KCC2 and SLC12A6/KCC3 inhibit their activity, blocking ion efflux. Also acts as a regulator of angiogenesis in endothelial cells. Also acts independently of the WNK1-SPAK/OSR1 kinase cascade by catalyzing phosphorylation of other substrates, such as SYT2, PCF11 and NEDD4L. Mediates phosphorylation of SYT2, regulating SYT2 association with phospholipids and membrane-binding. Regulates mRNA export in the nucleus by mediating phosphorylation of PCF11, thereby decreasing the association between PCF11 and POLR2A/RNA polymerase II and promoting mRNA export to the cytoplasm. Acts as a negative regulator of autophagy. Required for the abscission step during mitosis, independently of the WNK1-SPAK/OSR1 kinase cascade. WNK1 may also play a role in actin cytoskeletal reorganization. Also acts as a scaffold protein independently of its protein kinase activity: negatively regulates cell membrane localization of various transporters and channels, such as SLC4A4, SLC26A6, SLC26A9, TRPV4 and CFTR. Involved in the regulation of epithelial Na(+) channel (ENaC) by promoting activation of SGK1 in a kinase-independent manner. Probably activates SGK1 by acting as a scaffold protein that promotes the recruitment of SGK1 to the mTORC2 complex in response to chloride, leading to mTORC2-dependent phosphorylation and activation of SGK1. Acts as an assembly factor for the ER membrane protein complex independently of its protein kinase activity: associates with EMC2 in the cytoplasm via its amphipathic alpha-helix, and prevents EMC2 ubiquitination and subsequent degradation, thereby promoting EMC2 stabilization. Functionally, kinase-defective isoform specifically expressed in kidney, which acts as a dominant-negative regulator of the longer isoform 1. Does not directly inhibit WNK4 and has no direct effect on sodium and chloride ion transport. Down-regulates sodium-chloride cotransporter activity indirectly by inhibiting isoform 1, it associates with isoform 1 and attenuates its kinase activity. In kidney, may play an important role regulating sodium and potassium balance. Its function is as follows. Kinase-defective isoform produced by alternative promoter usage and alternative splicing. The chain is Serine/threonine-protein kinase WNK1 from Rattus norvegicus (Rat).